The sequence spans 171 residues: Alpha-amylase/trypsin inhibitor CMd (171 aa).

The first 24 residues, 1-24, serve as a signal peptide directing secretion; sequence MACKSSRSLLLLATVMVSVFAAAA.

The protein belongs to the protease inhibitor I6 (cereal trypsin/alpha-amylase inhibitor) family. Heterotetramer of one CMa, one CMb and two CMd chains. Post-translationally, five disulfide bonds, which are essential for the inhibitor activity, are probably present. Endosperm.

The protein localises to the secreted. Part of a complex with inhibitory activity, but CMd is inactive as a separate subunit. The polypeptide is Alpha-amylase/trypsin inhibitor CMd (IAT3) (Hordeum vulgare (Barley)).